The sequence spans 183 residues: Anterior gradient protein 1 (183 aa).

Positions 1 to 18 (MQAGLSLVCLVLLCSALG) are cleaved as a signal peptide.

It belongs to the AGR family. In terms of tissue distribution, from stage 18 (neurula) onward, expressed in the cement gland until it degenerates. More weakly expressed in the adjacent hatching gland.

It is found in the secreted. Does not appear to be required for cement gland formation. The protein is Anterior gradient protein 1 (ag1) of Xenopus laevis (African clawed frog).